Consider the following 156-residue polypeptide: Ecotin (156 aa).

Positions 1–19 (MKALLIAAGVAALSSTAMA) are cleaved as a signal peptide. Cysteine 65 and cysteine 102 form a disulfide bridge.

The protein belongs to the protease inhibitor I11 (ecotin) family. Homodimer.

The protein resides in the periplasm. General inhibitor of family S1 serine proteases. In Pseudomonas aeruginosa (strain LESB58), this protein is Ecotin.